A 1002-amino-acid chain; its full sequence is UPF0182 protein Mvan_1814 (1002 aa).

7 helical membrane-spanning segments follow: residues V16 to D36, L61 to L81, L112 to Y132, F174 to I194, I209 to D229, K258 to L278, and I286 to V306. The disordered stretch occupies residues L891–K958. The span at G893–P923 shows a compositional bias: low complexity. The span at P937 to G950 shows a compositional bias: pro residues.

Belongs to the UPF0182 family.

The protein resides in the cell membrane. The chain is UPF0182 protein Mvan_1814 from Mycolicibacterium vanbaalenii (strain DSM 7251 / JCM 13017 / BCRC 16820 / KCTC 9966 / NRRL B-24157 / PYR-1) (Mycobacterium vanbaalenii).